We begin with the raw amino-acid sequence, 122 residues long: UPF0102 protein RL0336 (122 aa).

It belongs to the UPF0102 family.

This is UPF0102 protein RL0336 from Rhizobium johnstonii (strain DSM 114642 / LMG 32736 / 3841) (Rhizobium leguminosarum bv. viciae).